The following is an 80-amino-acid chain: Diphthamide biosynthesis protein 3 (80 aa).

The DPH-type MB domain occupies 4-60; it reads FHDEVEIEDFEFDEEKDVYHYPCPCGDRFEIPREMLEMGEDVAQCPSCSLLIRVIYD. Fe cation is bound by residues Cys26, Cys28, Cys48, and Cys51.

This sequence belongs to the DPH3 family. In terms of assembly, component of the 2-(3-amino-3-carboxypropyl)histidine synthase complex composed of dph-1, dph-2, dph-3 and a NADH-dependent reductase. Fe(2+) serves as cofactor.

It carries out the reaction [3Fe-4S](1+)-[protein] + Fe(2+)-[Dph3] = [3Fe-4S](0)-[protein] + Fe(3+)-[Dph3]. It catalyses the reaction 2 [3Fe-4S](0)-[protein] + 2 Fe(2+)-[Dph3] + NADH = 2 [4Fe-4S](1+)-[protein] + 2 [Dph3] + NAD(+) + H(+). The protein operates within protein modification; peptidyl-diphthamide biosynthesis. Required for the first step of diphthamide biosynthesis, a post-translational modification of histidine which occurs in elongation factor 2. Dph-1 and dph-2 transfer a 3-amino-3-carboxypropyl (ACP) group from S-adenosyl-L-methionine (SAM) to a histidine residue, the reaction is assisted by a reduction system comprising dph-3 and a NADH-dependent reductase. Acts as an electron donor to reduce the Fe-S cluster in dph1-dph2 keeping the [4Fe-4S] clusters in the active and reduced state. Restores iron to dph-1-dph-2 iron-sulfur clusters which have degraded from [4Fe-4S] to [3Fe-4S] by donating an iron atom to reform [4Fe-4S] clusters, in a manner dependent on the presence of elongation factor 2 and SAM. Associates with the elongator complex and is required for tRNA Wobble base modifications mediated by the elongator complex. The elongator complex is required for multiple tRNA modifications, including mcm5U (5-methoxycarbonylmethyl uridine), mcm5s 2U (5-methoxycarbonylmethyl-2-thiouridine), and ncm5U (5-carbamoylmethyl uridine). The sequence is that of Diphthamide biosynthesis protein 3 from Caenorhabditis elegans.